The sequence spans 285 residues: Glutamate racemase (285 aa).

Substrate-binding positions include 28–29 (DS) and 60–61 (YG). Residue cysteine 92 is the Proton donor/acceptor of the active site. 93–94 (NT) serves as a coordination point for substrate. Cysteine 204 (proton donor/acceptor) is an active-site residue. Position 205 to 206 (205 to 206 (TH)) interacts with substrate.

It belongs to the aspartate/glutamate racemases family.

The catalysed reaction is L-glutamate = D-glutamate. The protein operates within cell wall biogenesis; peptidoglycan biosynthesis. Its function is as follows. Provides the (R)-glutamate required for cell wall biosynthesis. This chain is Glutamate racemase, found in Escherichia fergusonii (strain ATCC 35469 / DSM 13698 / CCUG 18766 / IAM 14443 / JCM 21226 / LMG 7866 / NBRC 102419 / NCTC 12128 / CDC 0568-73).